We begin with the raw amino-acid sequence, 191 residues long: Transcription factor FapR (191 aa).

In terms of domain architecture, MaoC-like spans 102–169 (GIARGHHLFA…RILVTSHVNQ (68 aa)).

Belongs to the FapR family.

Functionally, transcriptional factor involved in regulation of membrane lipid biosynthesis by repressing genes involved in fatty acid and phospholipid metabolism. The chain is Transcription factor FapR from Shouchella clausii (strain KSM-K16) (Alkalihalobacillus clausii).